A 385-amino-acid polypeptide reads, in one-letter code: Benzoate O-methyltransferase (385 aa).

Tyr-18 is an S-adenosyl-L-homocysteine binding site. Benzoate is bound at residue Gln-25. S-adenosyl-L-homocysteine contacts are provided by Cys-59, Asn-64, Asp-106, Leu-107, Ser-145, and Tyr-146. Residue Trp-167 coordinates benzoate. Mg(2+)-binding residues include Asn-184, Glu-270, Phe-272, and Asn-273.

It belongs to the methyltransferase superfamily. Type-7 methyltransferase family. SABATH subfamily. Requires Mg(2+) as cofactor.

The enzyme catalyses benzoate + S-adenosyl-L-methionine = methyl benzoate + S-adenosyl-L-homocysteine. In terms of biological role, methyltransferase involved in the biosynthesis of methyl benzoate in response to stresses. Utilizes exclusively benzoic acid (BA) as substrate. This Zea mays (Maize) protein is Benzoate O-methyltransferase (OMT8).